The primary structure comprises 930 residues: Translation initiation factor IF-2 (930 aa).

The segment covering 50-67 (FKPAAAPKVEAKPAAPKV) has biased composition (low complexity). Disordered regions lie at residues 50–217 (FKPA…SSEE) and 260–346 (EVVP…HELP). Composition is skewed to basic and acidic residues over residues 68-90 (SAEK…EAKP) and 110-125 (FKAE…AERR). The segment covering 129–141 (KGNNRDQQQNGNR) has biased composition (low complexity). 2 stretches are compositionally biased toward basic and acidic residues: residues 157-167 (RDNRRFNDQAK) and 262-295 (VPEK…DGPR). The span at 309 to 318 (NQKNSNWNNN) shows a compositional bias: low complexity. The span at 337-346 (VTERKFHELP) shows a compositional bias: basic and acidic residues. A tr-type G domain is found at 432 to 599 (ERPPVVTIMG…TVLLVAEIQE (168 aa)). The G1 stretch occupies residues 441–448 (GHVDHGKT). GTP is bound at residue 441-448 (GHVDHGKT). A G2 region spans residues 466–470 (GITQH). The tract at residues 487–490 (DTPG) is G3. Residues 487–491 (DTPGH) and 541–544 (NKID) contribute to the GTP site. Residues 541–544 (NKID) are G4. Residues 577–579 (SAK) form a G5 region.

It belongs to the TRAFAC class translation factor GTPase superfamily. Classic translation factor GTPase family. IF-2 subfamily.

The protein localises to the cytoplasm. One of the essential components for the initiation of protein synthesis. Protects formylmethionyl-tRNA from spontaneous hydrolysis and promotes its binding to the 30S ribosomal subunits. Also involved in the hydrolysis of GTP during the formation of the 70S ribosomal complex. The sequence is that of Translation initiation factor IF-2 from Streptococcus pneumoniae (strain Taiwan19F-14).